The following is a 67-amino-acid chain: DNA-directed RNA polymerase subunit omega (67 aa).

This sequence belongs to the RNA polymerase subunit omega family. As to quaternary structure, the RNAP catalytic core consists of 2 alpha, 1 beta, 1 beta' and 1 omega subunit. When a sigma factor is associated with the core the holoenzyme is formed, which can initiate transcription.

It carries out the reaction RNA(n) + a ribonucleoside 5'-triphosphate = RNA(n+1) + diphosphate. Its function is as follows. Promotes RNA polymerase assembly. Latches the N- and C-terminal regions of the beta' subunit thereby facilitating its interaction with the beta and alpha subunits. In Acidovorax ebreus (strain TPSY) (Diaphorobacter sp. (strain TPSY)), this protein is DNA-directed RNA polymerase subunit omega.